We begin with the raw amino-acid sequence, 344 residues long: Nuclear distribution protein nudE homolog 1 (344 aa).

Residues 1–93 (MEDSGKTFES…MQHSEGYRQI (93 aa)) are self-association. Residues 18–188 (WRDLAMTYKQ…ELAVQQKQDK (171 aa)) are a coiled coil. Positions 88 to 156 (EGYRQISALE…ERNAFLESEL (69 aa)) are interaction with PAFAH1B1. Residues 167-290 (QRLKDEARDL…QSPSRTSGPA (124 aa)) form an interaction with CENPF region. A disordered region spans residues 181-246 (AVQQKQDKPR…DSSTSGTPLT (66 aa)). Residue serine 211 is modified to Phosphoserine. 2 positions are modified to phosphothreonine: threonine 215 and threonine 228. Serine 239 bears the Phosphoserine mark. Threonine 243 and threonine 246 each carry phosphothreonine. A lipid anchor (S-palmitoyl cysteine; by ZDHHC2, ZDHHC3 and ZDHHC7) is attached at cysteine 274. The span at 279–289 (YDQSPSRTSGP) shows a compositional bias: polar residues. Positions 279–337 (YDQSPSRTSGPASGRGTKNRDGVDRRPGSTSVGDKGSGKRLEFGKPASEPASPALPSAQ) are disordered. Serine 282 is modified (phosphoserine). The span at 296–305 (KNRDGVDRRP) shows a compositional bias: basic and acidic residues. Serine 309 is modified (phosphoserine). The segment covering 324-336 (PASEPASPALPSA) has biased composition (low complexity).

This sequence belongs to the nudE family. As to quaternary structure, homodimer. Interacts with dynactin and PCM1. Interacts with CENPF, LIS1, CNTRL, dynein, tubulin gamma, PAFAH1B1, PCNT, SLMAP and TCP1. Interacts with ZNF365. Interacts with RAB9A; the interaction leads to RAB9A-dynein motor tethering. Interacts (via C-terminus) with MCRS1 (via C-terminus); phosphorylation of NDE1 inhibits the interaction. Phosphorylated in mitosis. Phosphorylation at Thr-246 is essential for the G2/M transition. Highly expressed in ovary. Also expressed in brain, heart, kidney, large intestine, liver, lung, small intestine and testis.

It localises to the cytoplasm. The protein resides in the cytoskeleton. Its subcellular location is the microtubule organizing center. It is found in the centrosome. The protein localises to the spindle. It localises to the chromosome. The protein resides in the centromere. Its subcellular location is the kinetochore. It is found in the cleavage furrow. The protein localises to the cytoplasmic vesicle membrane. Functionally, required for centrosome duplication and formation and function of the mitotic spindle. Essential for the development of the cerebral cortex. May regulate the production of neurons by controlling the orientation of the mitotic spindle during division of cortical neuronal progenitors of the proliferative ventricular zone of the brain. Orientation of the division plane perpendicular to the layers of the cortex gives rise to two proliferative neuronal progenitors whereas parallel orientation of the division plane yields one proliferative neuronal progenitor and a postmitotic neuron. A premature shift towards a neuronal fate within the progenitor population may result in an overall reduction in the final number of neurons and an increase in the number of neurons in the deeper layers of the cortex. Acts as a RAB9A/B effector that tethers RAB9-associated late endosomes to the dynein motor for their retrograde transport to the trans-Golgi network. The polypeptide is Nuclear distribution protein nudE homolog 1 (Mus musculus (Mouse)).